The chain runs to 1202 residues: Voltage-gated inwardly rectifying potassium channel KCNH6 (1202 aa).

Residues Met-1–Trp-405 are Cytoplasmic-facing. Residues Ile-36–Ser-84 form the PAS domain. A PAC domain is found at Cys-87–Leu-139. Disordered regions lie at residues Glu-203–Arg-243 and Glu-285–Asp-315. Residues Leu-213–Leu-222 show a composition bias toward basic and acidic residues. A helical membrane pass occupies residues Leu-406–Leu-426. Over Asn-427–Asp-443 the chain is Extracellular. N-linked (GlcNAc...) asparagine glycosylation occurs at Asn-437. A helical transmembrane segment spans residues Pro-444–Phe-464. The Cytoplasmic segment spans residues Arg-465–His-485. A helical transmembrane segment spans residues Tyr-486–Phe-506. Residues Arg-507–Thr-515 lie on the Extracellular side of the membrane. A helical; Voltage-sensor transmembrane segment spans residues Leu-516–Asp-536. Over Arg-537–Ala-543 the chain is Cytoplasmic. A helical membrane pass occupies residues Ala-544–Trp-564. Over Tyr-565 to Tyr-608 the chain is Extracellular. Asn-594 is a glycosylation site (N-linked (GlcNAc...) asparagine). An intramembrane region (pore-forming) is located at residues Val-609–Pro-629. Positions Ser-621–Asn-626 match the Selectivity filter motif. Residues Asn-630–Lys-635 are Extracellular-facing. Residues Ile-636–Val-656 form a helical membrane-spanning segment. The Cytoplasmic portion of the chain corresponds to Ser-657–Ser-1202. Residues Ala-739–Leu-839 form a cNMP-binding domain region. Disordered regions lie at residues Leu-912 to Thr-948, Thr-1092 to Ala-1112, and Thr-1140 to Ser-1202. Over residues Gly-928–Thr-937 the composition is skewed to polar residues. The segment covering Glu-1179–Ser-1195 has biased composition (basic and acidic residues).

It belongs to the potassium channel family. H (Eag) (TC 1.A.1.20) subfamily. Kv11.2/KCNH6 sub-subfamily. In terms of assembly, the potassium channel is probably composed of a homo- or heterotetrameric complex of pore-forming alpha subunits that can associate only within their subfamily.

The protein localises to the cell membrane. The enzyme catalyses K(+)(in) = K(+)(out). Its function is as follows. Pore-forming (alpha) subunit of voltage-gated inwardly rectifying potassium channel. Characterized by unusual gating kinetics by producing relatively small outward currents during membrane depolarization and large inward currents during subsequent repolarization which reflect a rapid inactivation during depolarization and quick recovery from inactivation but slow deactivation (closing) during repolarization. Activates even more slowly than KCNH2. This Gallus gallus (Chicken) protein is Voltage-gated inwardly rectifying potassium channel KCNH6.